We begin with the raw amino-acid sequence, 182 residues long: Carbonic anhydrase (182 aa).

Mg(2+) contacts are provided by His64, His81, and His86.

Belongs to the gamma-class carbonic anhydrase family. Homotrimer. Mg(2+) is required as a cofactor. It depends on Zn(2+) as a cofactor.

It catalyses the reaction hydrogencarbonate + H(+) = CO2 + H2O. Functionally, reversible hydration of carbon dioxide. The polypeptide is Carbonic anhydrase (Geobacillus kaustophilus (strain HTA426)).